Reading from the N-terminus, the 424-residue chain is 3-phosphoshikimate 1-carboxyvinyltransferase (424 aa).

Residues Lys-20, Ser-21, and Arg-25 each contribute to the 3-phosphoshikimate site. A phosphoenolpyruvate-binding site is contributed by Lys-20. Gly-92 and Arg-120 together coordinate phosphoenolpyruvate. Residues Ser-165, Gln-167, Asp-313, and Lys-340 each contribute to the 3-phosphoshikimate site. Residue Gln-167 participates in phosphoenolpyruvate binding. Asp-313 (proton acceptor) is an active-site residue. Residues Arg-344 and Arg-386 each coordinate phosphoenolpyruvate.

Belongs to the EPSP synthase family. Monomer.

It localises to the cytoplasm. It catalyses the reaction 3-phosphoshikimate + phosphoenolpyruvate = 5-O-(1-carboxyvinyl)-3-phosphoshikimate + phosphate. The protein operates within metabolic intermediate biosynthesis; chorismate biosynthesis; chorismate from D-erythrose 4-phosphate and phosphoenolpyruvate: step 6/7. Functionally, catalyzes the transfer of the enolpyruvyl moiety of phosphoenolpyruvate (PEP) to the 5-hydroxyl of shikimate-3-phosphate (S3P) to produce enolpyruvyl shikimate-3-phosphate and inorganic phosphate. This Bacillus cytotoxicus (strain DSM 22905 / CIP 110041 / 391-98 / NVH 391-98) protein is 3-phosphoshikimate 1-carboxyvinyltransferase.